The chain runs to 470 residues: Meiosis-specific with OB domain-containing protein (470 aa).

A DNA-binding region (OB) is located at residues 167–272 (IINVLAAVRS…EANILLNFIR (106 aa)).

It belongs to the MEIOB family. In terms of assembly, component of a multiprotein complex with RPA2 and SPATA22. Interacts with SPATA22. Interacts with the complex BRME1:HSF2BP:BRCA2.

The protein resides in the cytoplasm. It localises to the nucleus. It is found in the chromosome. Its function is as follows. Single-stranded DNA-binding protein required for homologous recombination in meiosis I. Required for double strand breaks (DSBs) repair and crossover formation and promotion of faithful and complete synapsis. Not required for the initial loading of recombinases but required to maintain a proper number of RAD51 and DMC1 foci after the zygotene stage. May act by ensuring the stabilization of recombinases, which is required for successful homology search and meiotic recombination. Displays Single-stranded DNA 3'-5' exonuclease activity in vitro. The chain is Meiosis-specific with OB domain-containing protein from Rattus norvegicus (Rat).